The primary structure comprises 773 residues: Protein FAM149A (773 aa).

2 stretches are compositionally biased toward low complexity: residues 18-37 (TSTA…AAAA) and 54-90 (LLRA…AAGA). 4 disordered regions span residues 18–155 (TSTA…RELG), 173–210 (DIGE…DSLP), 232–264 (FSSS…TERG), and 568–613 (TQNE…PWRL). Residues 174-186 (IGEEGASDGDSGD) show a composition bias toward acidic residues. The span at 245-264 (TSWSGSATQSSTTGSSTERG) shows a compositional bias: low complexity.

It belongs to the FAM149 family.

This is Protein FAM149A (FAM149A) from Homo sapiens (Human).